The chain runs to 407 residues: ETS domain-containing protein Elk-3 (407 aa).

A DNA-binding region (ETS) is located at residues 5–85 (ITLWQFLLQL…IGQKFVYKFV (81 aa)). Lysine 92 is covalently cross-linked (Glycyl lysine isopeptide (Lys-Gly) (interchain with G-Cter in SUMO2)). A Phosphoserine modification is found at serine 115. Residue lysine 165 forms a Glycyl lysine isopeptide (Lys-Gly) (interchain with G-Cter in SUMO2) linkage. Disordered stretches follow at residues 234–253 (SSASPFSSRSPSLSPNSPLP) and 271–298 (LEPLNLSSGSKTKSPSLPPKAKKPKGLE). The short motif at 273–277 (PLNLS) is the CTBP-binding motif element. The residue at position 396 (serine 396) is a Phosphoserine.

The protein belongs to the ETS family. As to quaternary structure, interacts with CTBP1.

Its subcellular location is the nucleus. Functionally, may be a negative regulator of transcription, but can activate transcription when coexpressed with Ras, Src or Mos. Forms a ternary complex with the serum response factor and the ETS and SRF motifs of the Fos serum response element. The chain is ETS domain-containing protein Elk-3 (ELK3) from Homo sapiens (Human).